A 274-amino-acid chain; its full sequence is 2,3,4,5-tetrahydropyridine-2,6-dicarboxylate N-succinyltransferase (274 aa).

Arginine 104 and aspartate 141 together coordinate substrate.

The protein belongs to the transferase hexapeptide repeat family. Homotrimer.

It is found in the cytoplasm. It carries out the reaction (S)-2,3,4,5-tetrahydrodipicolinate + succinyl-CoA + H2O = (S)-2-succinylamino-6-oxoheptanedioate + CoA. It participates in amino-acid biosynthesis; L-lysine biosynthesis via DAP pathway; LL-2,6-diaminopimelate from (S)-tetrahydrodipicolinate (succinylase route): step 1/3. This Photorhabdus laumondii subsp. laumondii (strain DSM 15139 / CIP 105565 / TT01) (Photorhabdus luminescens subsp. laumondii) protein is 2,3,4,5-tetrahydropyridine-2,6-dicarboxylate N-succinyltransferase.